The primary structure comprises 184 residues: Large ribosomal subunit protein bL9 (184 aa).

Residues 160–184 (LQNQKSEQQEAEQDANKEAADGDDS) form a disordered region. Basic and acidic residues predominate over residues 173–184 (DANKEAADGDDS).

Belongs to the bacterial ribosomal protein bL9 family.

Functionally, binds to the 23S rRNA. The protein is Large ribosomal subunit protein bL9 of Wolbachia sp. subsp. Drosophila simulans (strain wRi).